The primary structure comprises 922 residues: Golgi-associated RAB2 interactor protein 5B (922 aa).

6 disordered regions span residues 244–264 (DVRK…DRTH), 292–317 (QSSP…SPSH), 373–404 (TPYS…KAPS), 424–597 (AVPA…TQET), 758–830 (QPES…LRPS), and 842–869 (ATAR…LATV). The segment covering 292-305 (QSSPKACTSASDEA) has biased composition (polar residues). The segment covering 431 to 441 (KPPPGLAPPQK) has biased composition (pro residues). 2 stretches are compositionally biased toward low complexity: residues 442 to 458 (APAA…VPAP) and 471 to 495 (KAPA…ASAV). Pro residues predominate over residues 496-507 (PAPPQKTPPPSQ). Residues 758 to 788 (QPESHTWVKEGKRPWGEMKEQPWGEMKEPPW) show a composition bias toward basic and acidic residues.

The protein belongs to the GARIN family.

The sequence is that of Golgi-associated RAB2 interactor protein 5B from Homo sapiens (Human).